The sequence spans 291 residues: uncharacterized protein (291 aa).

The segment at 77 to 140 (TVPQSSPTAI…PPTPVVEKSP (64 aa)) is disordered. The segment covering 125-134 (PVTPAHPPTP) has biased composition (pro residues).

This is an uncharacterized protein from Synechocystis sp. (strain ATCC 27184 / PCC 6803 / Kazusa).